A 336-amino-acid chain; its full sequence is Probable G-protein coupled receptor 160 (336 aa).

Residues 1–20 are Extracellular-facing; that stretch reads MTALSSKNCSLQYQLHQSPQ. Asn-8 carries N-linked (GlcNAc...) asparagine glycosylation. Residues 21 to 41 traverse the membrane as a helical segment; the sequence is LLEASCLLFLIILGKVLLNIL. Residues 42 to 56 lie on the Cytoplasmic side of the membrane; the sequence is LLRVRRGDARWTLME. The helical transmembrane segment at 57-77 threads the bilayer; the sequence is YFCFSLALVDLLLLVNISILT. The Extracellular portion of the chain corresponds to 78–95; sequence YFRDFVVLGIRFTRYHIC. Residues 96-116 traverse the membrane as a helical segment; the sequence is LLTQIISFTYGFLHYPVCSLA. At 117 to 136 the chain is on the cytoplasmic side; it reads CIDYWCNLSRASKQSSRWQK. Residues 137–157 traverse the membrane as a helical segment; sequence LLYFLTVILTWISVLAYVLVD. Topologically, residues 158–186 are extracellular; sequence PAISVSLKAHRGYVYQCPAYVSTQSHWLS. Residues 187–207 traverse the membrane as a helical segment; it reads LSMLMVLFVAFLISWQEVVAL. The Cytoplasmic segment spans residues 208–243; that stretch reads LQAMRIASYKSKAALYFPFPLHCGYALSCREALLPR. The chain crosses the membrane as a helical span at residues 244–264; it reads LIVCFLGTWFPFVALQVLILS. Over 265 to 272 the chain is Extracellular; that stretch reads LRVQIPAY. The chain crosses the membrane as a helical span at residues 273–293; sequence IEMNVPWLYFVNSFLIAAVYW. Over 294–336 the chain is Cytoplasmic; it reads FNCHKLDLRDSSLPVDPFINWKCCFVPVHRLKQVERPMSIVIC.

It belongs to the G-protein coupled receptor 1 family.

It localises to the cell membrane. Its function is as follows. Orphan receptor. In Mus musculus (Mouse), this protein is Probable G-protein coupled receptor 160 (Gpr160).